Reading from the N-terminus, the 322-residue chain is Aspartate carbamoyltransferase catalytic subunit (322 aa).

Arginine 65 and threonine 66 together coordinate carbamoyl phosphate. Lysine 93 lines the L-aspartate pocket. The carbamoyl phosphate site is built by arginine 115, histidine 143, and glutamine 146. L-aspartate is bound by residues arginine 176 and arginine 230. The carbamoyl phosphate site is built by glycine 271 and proline 272.

The protein belongs to the aspartate/ornithine carbamoyltransferase superfamily. ATCase family. Heterododecamer (2C3:3R2) of six catalytic PyrB chains organized as two trimers (C3), and six regulatory PyrI chains organized as three dimers (R2).

It catalyses the reaction carbamoyl phosphate + L-aspartate = N-carbamoyl-L-aspartate + phosphate + H(+). It functions in the pathway pyrimidine metabolism; UMP biosynthesis via de novo pathway; (S)-dihydroorotate from bicarbonate: step 2/3. Functionally, catalyzes the condensation of carbamoyl phosphate and aspartate to form carbamoyl aspartate and inorganic phosphate, the committed step in the de novo pyrimidine nucleotide biosynthesis pathway. In Brucella anthropi (strain ATCC 49188 / DSM 6882 / CCUG 24695 / JCM 21032 / LMG 3331 / NBRC 15819 / NCTC 12168 / Alc 37) (Ochrobactrum anthropi), this protein is Aspartate carbamoyltransferase catalytic subunit.